Reading from the N-terminus, the 840-residue chain is Telomere length regulation protein TEL2 homolog (840 aa).

Met-1 is modified (N-acetylmethionine). Residues Pro-374, Pro-419, and Pro-422 each carry the hydroxyproline modification. The tract at residues 443 to 497 (PEPAGDCSSVSRGPSPAPVDTESPVEMPEKAVESDVPPTQPQGSDSELDSDDEFI) is disordered. Position 457 is a phosphoserine (Ser-457). Ser-486 carries the post-translational modification Phosphoserine; by CK2. Ser-488, Ser-492, and Ser-837 each carry phosphoserine. The span at 488 to 497 (SELDSDDEFI) shows a compositional bias: acidic residues.

Belongs to the TEL2 family. As to quaternary structure, component of the TTT complex composed of TELO2, TTI1 and TTI2. Interacts with ATM, ATR, MTOR, PRKDC, RUVBL2, TTI1, TTI2, SMG1 and TRRAP. Component of the mTORC1 and mTORC2 complexes. Interacts (phosphorylated form) with PIH1D1. Interaction with PIH1D1 mediates interaction of TELO2 with the R2TP complex composed of RUVBL1, RUVBL2, PIH1D1, and RPAP3. Post-translationally, hydroxylation by PHD3 is required for a proper interaction with ATR, and activation of the ATR/CHK1/p53 pathway following DNA damage. In terms of processing, phosphorylated at Ser-486 by CK2 following growth factor deprivation, leading to its subsequent ubiquitination by the SCF(FBXO9) complex. Phosphorylation by CK2 only takes place when TELO2 is bound to mTORC1, not mTORC2; leading to selective ubiquitination of mTORC1-associated protein. Ubiquitinated by the SCF(FBXO9) complex following phosphorylation by CK2 in response to growth factor deprivation, leading to its degradation by the proteasome. Only mTORC1-associated protein is ubiquitinated and degraded, leading to selective inactivation of mTORC1 to restrain cell growth and protein translation, while mTORC2 is activated due to the relief of feedback inhibition by mTORC1.

The protein localises to the cytoplasm. Its subcellular location is the membrane. The protein resides in the nucleus. It localises to the chromosome. It is found in the telomere. Regulator of the DNA damage response (DDR). Part of the TTT complex that is required to stabilize protein levels of the phosphatidylinositol 3-kinase-related protein kinase (PIKK) family proteins. The TTT complex is involved in the cellular resistance to DNA damage stresses, like ionizing radiation (IR), ultraviolet (UV) and mitomycin C (MMC). Together with the TTT complex and HSP90 may participate in the proper folding of newly synthesized PIKKs. Promotes assembly, stabilizes and maintains the activity of mTORC1 and mTORC2 complexes, which regulate cell growth and survival in response to nutrient and hormonal signals. May be involved in telomere length regulation. The polypeptide is Telomere length regulation protein TEL2 homolog (Telo2) (Mus musculus (Mouse)).